The sequence spans 447 residues: GTPase Der (447 aa).

EngA-type G domains lie at 3–167 (PVIA…VQER) and 181–354 (VKIA…AAAM). Residues 9-16 (GRPNVGKS), 56-60 (DTGGF), 119-122 (NKAE), 187-194 (GRPNVGKS), 234-238 (DTAGL), and 299-302 (NKWD) each bind GTP. One can recognise a KH-like domain in the interval 355–439 (IKLPTPQITR…PLRIEFRTNK (85 aa)).

The protein belongs to the TRAFAC class TrmE-Era-EngA-EngB-Septin-like GTPase superfamily. EngA (Der) GTPase family. Associates with the 50S ribosomal subunit.

Functionally, GTPase that plays an essential role in the late steps of ribosome biogenesis. The protein is GTPase Der of Cupriavidus metallidurans (strain ATCC 43123 / DSM 2839 / NBRC 102507 / CH34) (Ralstonia metallidurans).